A 353-amino-acid polypeptide reads, in one-letter code: MKAKTRQIRVGNVPVGGDAPCSVQSMCNTDTRDAGATLDQINALAAAGCEIVRCAVPDMAAAEALGAIKRQSPIPVIADIHFDYKLALKVLEGGIDGLRLNPGNIGERWKVEEVVAAARERLVPIRIGVNAGSLEKELLQKYGHPTAEAMVESALGHVRILEELGYDQIKISLKASDVPKTVAAYRLLAQRIDYPLHIGITEAGTMFSGTIKSAVGLGILLADGIGDTLRVSLTGDPVDEVRVGFEILKALNLRQKGINLVSCPTCGRCQINLIGVAEEVEKRLAGIDAHLTVAVMGCVVNGPGEAREADVGIAGGRGEGLLFRNGEIVRKVPEADMADALIAEVEKILAEKH.

4 residues coordinate [4Fe-4S] cluster: Cys263, Cys266, Cys298, and Glu305.

It belongs to the IspG family. [4Fe-4S] cluster is required as a cofactor.

It carries out the reaction (2E)-4-hydroxy-3-methylbut-2-enyl diphosphate + oxidized [flavodoxin] + H2O + 2 H(+) = 2-C-methyl-D-erythritol 2,4-cyclic diphosphate + reduced [flavodoxin]. It functions in the pathway isoprenoid biosynthesis; isopentenyl diphosphate biosynthesis via DXP pathway; isopentenyl diphosphate from 1-deoxy-D-xylulose 5-phosphate: step 5/6. Converts 2C-methyl-D-erythritol 2,4-cyclodiphosphate (ME-2,4cPP) into 1-hydroxy-2-methyl-2-(E)-butenyl 4-diphosphate. The protein is 4-hydroxy-3-methylbut-2-en-1-yl diphosphate synthase (flavodoxin) of Geobacter sulfurreducens (strain ATCC 51573 / DSM 12127 / PCA).